Here is a 184-residue protein sequence, read N- to C-terminus: Large ribosomal subunit protein uL6 (184 aa).

It belongs to the universal ribosomal protein uL6 family. In terms of assembly, part of the 50S ribosomal subunit.

In terms of biological role, this protein binds to the 23S rRNA, and is important in its secondary structure. It is located near the subunit interface in the base of the L7/L12 stalk, and near the tRNA binding site of the peptidyltransferase center. The chain is Large ribosomal subunit protein uL6 from Thermotoga maritima (strain ATCC 43589 / DSM 3109 / JCM 10099 / NBRC 100826 / MSB8).